The primary structure comprises 232 residues: 5'-methylthioadenosine/S-adenosylhomocysteine nucleosidase (232 aa).

Glutamate 12 functions as the Proton acceptor in the catalytic mechanism. Substrate is bound by residues glycine 78, methionine 153, and 174 to 175 (ME). The active-site Proton donor is aspartate 198.

This sequence belongs to the PNP/UDP phosphorylase family. MtnN subfamily.

The enzyme catalyses S-adenosyl-L-homocysteine + H2O = S-(5-deoxy-D-ribos-5-yl)-L-homocysteine + adenine. It catalyses the reaction S-methyl-5'-thioadenosine + H2O = 5-(methylsulfanyl)-D-ribose + adenine. The catalysed reaction is 5'-deoxyadenosine + H2O = 5-deoxy-D-ribose + adenine. It participates in amino-acid biosynthesis; L-methionine biosynthesis via salvage pathway; S-methyl-5-thio-alpha-D-ribose 1-phosphate from S-methyl-5'-thioadenosine (hydrolase route): step 1/2. In terms of biological role, catalyzes the irreversible cleavage of the glycosidic bond in both 5'-methylthioadenosine (MTA) and S-adenosylhomocysteine (SAH/AdoHcy) to adenine and the corresponding thioribose, 5'-methylthioribose and S-ribosylhomocysteine, respectively. Also cleaves 5'-deoxyadenosine, a toxic by-product of radical S-adenosylmethionine (SAM) enzymes, into 5-deoxyribose and adenine. In Hydrogenovibrio crunogenus (strain DSM 25203 / XCL-2) (Thiomicrospira crunogena), this protein is 5'-methylthioadenosine/S-adenosylhomocysteine nucleosidase.